A 412-amino-acid chain; its full sequence is Inactive serine protease 35 (412 aa).

Residues 1-23 form the signal peptide; the sequence is MGAMFFGLMLFTLGWTLIDGSES. Asparagine 110 carries an N-linked (GlcNAc...) asparagine glycan. Residues 124–407 enclose the Peptidase S1 domain; it reads VYGTDSRFSI…ICLWMHGDDA (284 aa). The cysteines at positions 154 and 170 are disulfide-linked. Residues 192–207 are compositionally biased toward basic residues; sequence RNKGGGKRRRGSRRNR. The interval 192 to 246 is disordered; the sequence is RNKGGGKRRRGSRRNRREVSGAGREGSQDSLKETAKAGRRRKGSARRQRAADGRP. The span at 217–227 shows a compositional bias: basic and acidic residues; sequence GSQDSLKETAK. Positions 228–239 are enriched in basic residues; that stretch reads AGRRRKGSARRQ.

It belongs to the peptidase S1 family.

Its subcellular location is the secreted. The polypeptide is Inactive serine protease 35 (PRSS35) (Bos taurus (Bovine)).